Consider the following 200-residue polypeptide: Max dimerization protein 3 (200 aa).

Disordered stretches follow at residues 26–56 (EHGYASILPCDPATPGRRKRQRTNSNPDNVR) and 134–164 (LLPPNTERIRTDSLDSSTLSSERSDSDQEDL). The region spanning 54-106 (NVRSVHNELEKHRRAQLRRCLEQLKQQVPLSMENSRHTTLSLLHRAKQHIKKL) is the bHLH domain.

As to quaternary structure, efficient DNA binding requires dimerization with another bHLH protein. Binds DNA as a heterodimer with MAX.

The protein localises to the nucleus. Its function is as follows. Transcriptional repressor. Binds with MAX to form a sequence-specific DNA-binding protein complex which recognizes the core sequence 5'-CAC[GA]TG-3'. The sequence is that of Max dimerization protein 3 (mxd3) from Xenopus tropicalis (Western clawed frog).